The chain runs to 464 residues: Cytochrome P450 85A1 (464 aa).

Residues 2 to 22 form a helical membrane-spanning segment; that stretch reads AFFLIFLSSFFGLCIFCTALL. Residue Cys414 participates in heme binding.

It belongs to the cytochrome P450 family. Requires heme as cofactor. Expressed in sub-meristematic regions of shoot and root apexes, in zones undergoing lateral root formation, in fruits, and in all flower parts, with a high expression in young flower buds and at the joint in the pedicel.

The protein resides in the membrane. The catalysed reaction is 6-deoxocastasterone + reduced [NADPH--hemoprotein reductase] + O2 = 6alpha-hydroxycastasterone + oxidized [NADPH--hemoprotein reductase] + H2O + H(+). It carries out the reaction 6alpha-hydroxycastasterone + reduced [NADPH--hemoprotein reductase] + O2 = castasterone + oxidized [NADPH--hemoprotein reductase] + 2 H2O + H(+). It catalyses the reaction 6-deoxocastasterone + 2 reduced [NADPH--hemoprotein reductase] + 2 O2 = castasterone + 2 oxidized [NADPH--hemoprotein reductase] + 3 H2O + 2 H(+). It participates in plant hormone biosynthesis; brassinosteroid biosynthesis. Catalyzes the C6-oxidation step in brassinosteroids biosynthesis. Converts 6-deoxocastasterone (6-deoxoCS) to castasterone (CS). May also convert 6-deoxoteasterone (6-deoxoTE) to teasterone (TE), 3-dehydro-6-deoxoteasterone (6-deoxo3DT, 6-deoxo3DHT) to 3-dehydroteasterone (3DT, 3-DHT), and 6-deoxotyphasterol (6-deoxoTY) to typhasterol (TY), but not castasterone (CS) to brassinolide (BL). This chain is Cytochrome P450 85A1, found in Solanum lycopersicum (Tomato).